Consider the following 469-residue polypeptide: 3-isopropylmalate dehydratase large subunit (469 aa).

Cys350, Cys410, and Cys413 together coordinate [4Fe-4S] cluster.

This sequence belongs to the aconitase/IPM isomerase family. LeuC type 1 subfamily. In terms of assembly, heterodimer of LeuC and LeuD. It depends on [4Fe-4S] cluster as a cofactor.

It carries out the reaction (2R,3S)-3-isopropylmalate = (2S)-2-isopropylmalate. It participates in amino-acid biosynthesis; L-leucine biosynthesis; L-leucine from 3-methyl-2-oxobutanoate: step 2/4. Catalyzes the isomerization between 2-isopropylmalate and 3-isopropylmalate, via the formation of 2-isopropylmaleate. This Allorhizobium ampelinum (strain ATCC BAA-846 / DSM 112012 / S4) (Agrobacterium vitis (strain S4)) protein is 3-isopropylmalate dehydratase large subunit.